Here is a 217-residue protein sequence, read N- to C-terminus: Adenylate kinase (217 aa).

10–15 (GAGKGT) contributes to the ATP binding site. Residues 30–59 (STGDMFRAAMKEGTPLGLQAKQYMDRGDLV) form an NMP region. AMP-binding positions include T31, R36, 57-59 (DLV), 85-88 (GFPR), and Q92. Residues 126-163 (GRRICRNCGATYHLIFHPPAKPGVCDKCGGELYQRADD) form an LID region. ATP is bound at residue R127. Residues C130 and C133 each coordinate Zn(2+). 136 to 137 (TY) is a binding site for ATP. Positions 150 and 153 each coordinate Zn(2+). AMP-binding residues include R160 and R171. Q199 serves as a coordination point for ATP.

This sequence belongs to the adenylate kinase family. Monomer.

The protein resides in the cytoplasm. It carries out the reaction AMP + ATP = 2 ADP. Its pathway is purine metabolism; AMP biosynthesis via salvage pathway; AMP from ADP: step 1/1. In terms of biological role, catalyzes the reversible transfer of the terminal phosphate group between ATP and AMP. Plays an important role in cellular energy homeostasis and in adenine nucleotide metabolism. The sequence is that of Adenylate kinase from Geobacillus stearothermophilus (Bacillus stearothermophilus).